The primary structure comprises 96 residues: MARITEAEVRHVAGLARLAITDEEVTHFTEQLTKILEFAEQLDELDTTGVEPTTHALDLKNVLRKDEVRPSLPREEVERMAPDWENGQVRVPAVFE.

It belongs to the GatC family. As to quaternary structure, heterotrimer of A, B and C subunits.

The enzyme catalyses L-glutamyl-tRNA(Gln) + L-glutamine + ATP + H2O = L-glutaminyl-tRNA(Gln) + L-glutamate + ADP + phosphate + H(+). It carries out the reaction L-aspartyl-tRNA(Asn) + L-glutamine + ATP + H2O = L-asparaginyl-tRNA(Asn) + L-glutamate + ADP + phosphate + 2 H(+). In terms of biological role, allows the formation of correctly charged Asn-tRNA(Asn) or Gln-tRNA(Gln) through the transamidation of misacylated Asp-tRNA(Asn) or Glu-tRNA(Gln) in organisms which lack either or both of asparaginyl-tRNA or glutaminyl-tRNA synthetases. The reaction takes place in the presence of glutamine and ATP through an activated phospho-Asp-tRNA(Asn) or phospho-Glu-tRNA(Gln). In Exiguobacterium sp. (strain ATCC BAA-1283 / AT1b), this protein is Aspartyl/glutamyl-tRNA(Asn/Gln) amidotransferase subunit C.